The following is an 858-amino-acid chain: Elongation factor 2b (858 aa).

The tr-type G domain maps to 17–362 (SNIRNMSVIA…MITIHLPSPV (346 aa)). GTP-binding positions include 26 to 33 (AHVDHGKS), 158 to 161 (NKMD), and 216 to 218 (SGL). His-715 carries the post-translational modification Diphthamide.

Belongs to the TRAFAC class translation factor GTPase superfamily. Classic translation factor GTPase family. EF-G/EF-2 subfamily. Binds to 80S ribosomes. Actively translating ribosomes show mutually exclusive binding of eIF5a (EIF5A or EIF5A2) and EEF2/eEF2. Interacts with serbp1; interaction sequesters eef2/eEF2 at the A-site of the ribosome, thereby blocking the interaction sites of the mRNA-tRNA complex, promoting ribosome stabilization and hibernation. Interacts with habp4; interaction takes place at the A-site of hibernating ribosomes and promotes ribosome stabilization.

The protein resides in the cytoplasm. The protein localises to the nucleus. The enzyme catalyses GTP + H2O = GDP + phosphate + H(+). In terms of biological role, catalyzes the GTP-dependent ribosomal translocation step during translation elongation. During this step, the ribosome changes from the pre-translocational (PRE) to the post-translocational (POST) state as the newly formed A-site-bound peptidyl-tRNA and P-site-bound deacylated tRNA move to the P and E sites, respectively. Catalyzes the coordinated movement of the two tRNA molecules, the mRNA and conformational changes in the ribosome. This chain is Elongation factor 2b, found in Danio rerio (Zebrafish).